The following is a 317-amino-acid chain: Acetyl-coenzyme A carboxylase carboxyl transferase subunit alpha (317 aa).

In terms of domain architecture, CoA carboxyltransferase C-terminal spans 31 to 292 (RFEPELAQLE…DKALWATLTS (262 aa)).

It belongs to the AccA family. In terms of assembly, acetyl-CoA carboxylase is a heterohexamer composed of biotin carboxyl carrier protein (AccB), biotin carboxylase (AccC) and two subunits each of ACCase subunit alpha (AccA) and ACCase subunit beta (AccD).

The protein resides in the cytoplasm. It catalyses the reaction N(6)-carboxybiotinyl-L-lysyl-[protein] + acetyl-CoA = N(6)-biotinyl-L-lysyl-[protein] + malonyl-CoA. It functions in the pathway lipid metabolism; malonyl-CoA biosynthesis; malonyl-CoA from acetyl-CoA: step 1/1. Functionally, component of the acetyl coenzyme A carboxylase (ACC) complex. First, biotin carboxylase catalyzes the carboxylation of biotin on its carrier protein (BCCP) and then the CO(2) group is transferred by the carboxyltransferase to acetyl-CoA to form malonyl-CoA. In Sorangium cellulosum (strain So ce56) (Polyangium cellulosum (strain So ce56)), this protein is Acetyl-coenzyme A carboxylase carboxyl transferase subunit alpha.